The primary structure comprises 528 residues: Proteinaceous RNase P 2 (528 aa).

Residues 1–16 (MAASDQHRSRRHDESS) show a composition bias toward basic and acidic residues. The disordered stretch occupies residues 1–28 (MAASDQHRSRRHDESSSRPNKKKKVSRN). 4 PPR repeats span residues 29-64 (PETNLLFNLNSCSKSKDLSAALALYDAAITSSEVRL), 72-107 (LLYLCSASITDISLQYLAIDRGFEIFDRMVSSGISP), 108-142 (NEASVTSVARLAAAKGNGDYAFKVVKEFVSVGGVS), and 145-179 (RLRTYAPALLCFCEKLEAEKGYEVEEHMEAAGIAL). Positions 275–511 (VSSTGRCLSC…NEESSRTWMC (237 aa)) constitute a PRORP domain. Cys281 and Cys284 together coordinate Zn(2+). Mg(2+) is bound by residues Asp343, Asp421, Asp422, and Asp440. His494 and Cys511 together coordinate Zn(2+).

It belongs to the PPR family. P subfamily. Monomer; forms dimers in crystallo but monomers in solution. Mg(2+) is required as a cofactor.

Its subcellular location is the nucleus. The enzyme catalyses Endonucleolytic cleavage of RNA, removing 5'-extranucleotides from tRNA precursor.. In terms of biological role, endonuclease RNase P responsible for the 5' maturation of tRNA precursors. Preferentially binds precursor tRNAs containing short 5' leaders and 3' trailers. Also involved in the maturation of mRNA and small nucleolar RNA (snoRNA). This chain is Proteinaceous RNase P 2 (PRORP2), found in Arabidopsis thaliana (Mouse-ear cress).